A 372-amino-acid chain; its full sequence is Cyclin-A3-2 (372 aa).

Residues 53–73 are disordered; that stretch reads NQKKETQKPKRNLKPPPAKQI.

It belongs to the cyclin family. Cyclin AB subfamily.

The polypeptide is Cyclin-A3-2 (CYCA3-2) (Arabidopsis thaliana (Mouse-ear cress)).